The chain runs to 288 residues: Coenzyme gamma-F420-2:alpha-L-glutamate ligase (288 aa).

Residues 101–287 (IKLLAKNKIK…IAEALVRYAK (187 aa)) form the ATP-grasp domain. ATP is bound by residues lysine 139, 173 to 186 (QEFI…LYRD), and arginine 202. Aspartate 245, glutamate 257, and asparagine 259 together coordinate Mn(2+).

Belongs to the RimK family. CofF subfamily. Monomer. Requires Mn(2+) as cofactor.

The enzyme catalyses oxidized coenzyme F420-2 + L-glutamate + ATP = oxidized coenzyme alpha-F420-3 + ADP + phosphate + H(+). Its pathway is cofactor biosynthesis; coenzyme F420 biosynthesis. Its activity is regulated as follows. Inhibited by KCl. Catalyzes the ATP-dependent addition of one alpha-linked L-glutamate molecule to coenzyme gamma-F420-2, producing alpha-F420-3, the major form of coenzyme F420 found in M.jannaschii. Thus, caps the gamma-polyglutamate tail of coenzyme F420 with a terminal alpha-linked glutamate. Prefers ATP to other purine nucleotide triphosphates; GTP gives about 25% of the activity observed with ATP. Cannot catalyze the addition of the following amino acids or analogs: D-glutamate, beta-glutamate, L-aspartate, L-glutamine, L-alpha-aminoadipate, or D,L-2-amino-4-phosphono-butyrate. The chain is Coenzyme gamma-F420-2:alpha-L-glutamate ligase (cofF) from Methanocaldococcus jannaschii (strain ATCC 43067 / DSM 2661 / JAL-1 / JCM 10045 / NBRC 100440) (Methanococcus jannaschii).